Here is a 1043-residue protein sequence, read N- to C-terminus: Protein translocase subunit SecA (1043 aa).

ATP-binding positions include glutamine 143, glycine 161 to threonine 165, and aspartate 665. Low complexity predominate over residues alanine 980 to alanine 1005. A disordered region spans residues alanine 980–alanine 1043. Basic and acidic residues predominate over residues glutamate 1008–glycine 1022. Zn(2+) contacts are provided by cysteine 1027, cysteine 1029, cysteine 1038, and histidine 1039. Basic residues predominate over residues lysine 1033–alanine 1043.

The protein belongs to the SecA family. As to quaternary structure, monomer and homodimer. Part of the essential Sec protein translocation apparatus which comprises SecA, SecYEG and auxiliary proteins SecDF. Other proteins may also be involved. Requires Zn(2+) as cofactor.

The protein localises to the cell inner membrane. The protein resides in the cytoplasm. The enzyme catalyses ATP + H2O + cellular proteinSide 1 = ADP + phosphate + cellular proteinSide 2.. Its function is as follows. Part of the Sec protein translocase complex. Interacts with the SecYEG preprotein conducting channel. Has a central role in coupling the hydrolysis of ATP to the transfer of proteins into and across the cell membrane, serving as an ATP-driven molecular motor driving the stepwise translocation of polypeptide chains across the membrane. This Chloroherpeton thalassium (strain ATCC 35110 / GB-78) protein is Protein translocase subunit SecA.